The following is a 178-amino-acid chain: Putative pre-16S rRNA nuclease (178 aa).

Residues 1 to 18 (MDHAEQGPDRPGVDDPGR) are compositionally biased toward basic and acidic residues. The tract at residues 1 to 21 (MDHAEQGPDRPGVDDPGRGRR) is disordered.

Belongs to the YqgF nuclease family.

It localises to the cytoplasm. Functionally, could be a nuclease involved in processing of the 5'-end of pre-16S rRNA. This Rhodococcus jostii (strain RHA1) protein is Putative pre-16S rRNA nuclease.